The following is an 87-amino-acid chain: MAHKKGASSSRNGRDSNAQRLGVKRFGGQSVSAGEILVRQRGTHFHPGVNVGRGGDDTLFALSAGAVEFGTKRGRKTVNIVPAAAEV.

Positions 1-25 (MAHKKGASSSRNGRDSNAQRLGVKR) are disordered. A compositionally biased stretch (polar residues) spans 7-19 (ASSSRNGRDSNAQ).

The protein belongs to the bacterial ribosomal protein bL27 family.

In Rhodococcus opacus (strain B4), this protein is Large ribosomal subunit protein bL27.